The sequence spans 754 residues: Catalase-peroxidase (754 aa).

Positions 1–29 are disordered; the sequence is MGTQPARKLRNRVFPHPHNHRKEKPMAND. Over residues 7–23 the composition is skewed to basic residues; the sequence is RKLRNRVFPHPHNHRKE. The active-site Tryptophan radical intermediate is Trp106. The segment at residues 122 to 249 is a cross-link (tryptophyl-tyrosyl-methioninium (Trp-Tyr) (with M-275)); sequence WHAAGTYRIA…LAAVQMGLIY (128 aa). The Proton acceptor role is filled by His123. A cross-link (tryptophyl-tyrosyl-methioninium (Tyr-Met) (with W-122)) is located at residues 249-275; it reads YVNPEGVDGHPDPLCTAQDVRTTFARM. His290 contributes to the heme b binding site.

It belongs to the peroxidase family. Peroxidase/catalase subfamily. In terms of assembly, homodimer. Requires heme b as cofactor. Post-translationally, formation of the three residue Trp-Tyr-Met cross-link is important for the catalase, but not the peroxidase activity of the enzyme.

It catalyses the reaction H2O2 + AH2 = A + 2 H2O. It carries out the reaction 2 H2O2 = O2 + 2 H2O. Functionally, bifunctional enzyme with both catalase and broad-spectrum peroxidase activity. Also displays NADH oxidase, isoniazid hydrazine lyase and isonicotinoyl-NAD synthase activities. This chain is Catalase-peroxidase, found in Synechocystis sp. (strain ATCC 27184 / PCC 6803 / Kazusa).